Consider the following 155-residue polypeptide: Large ribosomal subunit protein uL22 (155 aa).

A disordered region spans residues 109–155 (HITVIVESRPPKKAGKQGASASAARARRAQASKAATKKATDSKEGSE). The segment covering 146 to 155 (KATDSKEGSE) has biased composition (basic and acidic residues).

This sequence belongs to the universal ribosomal protein uL22 family. As to quaternary structure, part of the 50S ribosomal subunit.

Its function is as follows. This protein binds specifically to 23S rRNA; its binding is stimulated by other ribosomal proteins, e.g. L4, L17, and L20. It is important during the early stages of 50S assembly. It makes multiple contacts with different domains of the 23S rRNA in the assembled 50S subunit and ribosome. In terms of biological role, the globular domain of the protein is located near the polypeptide exit tunnel on the outside of the subunit, while an extended beta-hairpin is found that lines the wall of the exit tunnel in the center of the 70S ribosome. The polypeptide is Large ribosomal subunit protein uL22 (Mycolicibacterium vanbaalenii (strain DSM 7251 / JCM 13017 / BCRC 16820 / KCTC 9966 / NRRL B-24157 / PYR-1) (Mycobacterium vanbaalenii)).